We begin with the raw amino-acid sequence, 93 residues long: UPF0250 protein PA3998 (93 aa).

Belongs to the UPF0250 family.

The polypeptide is UPF0250 protein PA3998 (Pseudomonas aeruginosa (strain ATCC 15692 / DSM 22644 / CIP 104116 / JCM 14847 / LMG 12228 / 1C / PRS 101 / PAO1)).